The chain runs to 1972 residues: Myosin-11 (1972 aa).

Phosphoserine occurs at positions 8, 23, and 40. The region spanning 31-81 (AAKRLVWVPSEKQGFEAASIKEEKGDEVVVELVENGKKVTVGKDDIQKMNP) is the Myosin N-terminal SH3-like domain. The region spanning 85-783 (SKVEDMAELT…VLAHLEEERD (699 aa)) is the Myosin motor domain. Lysine 129 bears the N6,N6,N6-trimethyllysine mark. 178 to 185 (GESGAGKT) provides a ligand contact to ATP. 2 actin-binding regions span residues 661-683 (LGKL…IPNH) and 762-776 (RIGQ…GVLA). Residues 786–815 (ITDVIMAFQAMCRGYLARKAFAKRQQQLTA) form the IQ domain. The stretch at 844-1934 (LLQVTRQEEE…KSKLRRGNET (1091 aa)) forms a coiled coil. The segment at 858–882 (EDELQKTKERQQKAENELKELEQKH) is disordered. The residue at position 1177 (threonine 1177) is a Phosphothreonine. Residues serine 1684 and serine 1722 each carry the phosphoserine modification. 2 disordered regions span residues 1744 to 1800 (ELEE…LRSK) and 1866 to 1972 (EQYK…KASE). The segment covering 1762–1788 (ATQQAEQLSNELATERSTAQKNESARQ) has biased composition (polar residues). Composition is skewed to basic and acidic residues over residues 1789–1800 (QLERQNKELRSK) and 1866–1876 (EQYKEQAEKGN). The tract at residues 1935–1972 (SFVPSRRSGGRRVIENADGSEEETDTRDADFNGTKASE) is C-terminal. Position 1954 is a phosphoserine (serine 1954). Threonine 1958 bears the Phosphothreonine mark. A Phosphoserine modification is found at serine 1971.

It belongs to the TRAFAC class myosin-kinesin ATPase superfamily. Myosin family. As to quaternary structure, muscle myosin is a hexameric protein that consists of 2 heavy chain subunits (MHC), 2 alkali light chain subunits (MLC) and 2 regulatory light chain subunits (MLC-2). Smooth muscle; expressed in the umbilical artery, bladder, esophagus and trachea. Isoform 1 is mostly found in slowly contracting tonic muscles.

Its subcellular location is the melanosome. Functionally, muscle contraction. The protein is Myosin-11 (MYH11) of Homo sapiens (Human).